We begin with the raw amino-acid sequence, 464 residues long: Elongation factor 1-alpha (464 aa).

The 238-residue stretch at 5–242 folds into the tr-type G domain; the sequence is KTHINIVVIG…DSVVPPQRPT (238 aa). GTP contacts are provided by residues 14–21, 91–95, and 153–156; these read GHVDSGKS, DAPGH, and NKMD. E301 and E374 each carry 5-glutamyl glycerylphosphorylethanolamine.

Belongs to the TRAFAC class translation factor GTPase superfamily. Classic translation factor GTPase family. EF-Tu/EF-1A subfamily.

Its subcellular location is the cytoplasm. Its function is as follows. This protein promotes the GTP-dependent binding of aminoacyl-tRNA to the A-site of ribosomes during protein biosynthesis. This chain is Elongation factor 1-alpha, found in Onchocerca volvulus.